Reading from the N-terminus, the 303-residue chain is Taste receptor type 2 member 13 (303 aa).

Residues 1–7 are Extracellular-facing; it reads MESALPS. The helical transmembrane segment at 8–28 threads the bilayer; it reads ILTLVIIAEFIIGNLSNGFIV. Residues 29 to 55 lie on the Cytoplasmic side of the membrane; the sequence is LINYIDWVSKRELSSVDKLLIILAISR. Residues 56 to 76 traverse the membrane as a helical segment; the sequence is IGLIWEILVSWFLALHYLAIF. Residues 77–85 lie on the Extracellular side of the membrane; it reads VSGTGLRIM. The chain crosses the membrane as a helical span at residues 86 to 106; sequence IFSWIVSNHFSLWLATILSIF. Residues 107–128 are Cytoplasmic-facing; the sequence is YLLKIASFSSPAFLYLKWRVNK. Residues 129–149 form a helical membrane-spanning segment; the sequence is VILMILLGSLVFLFLNLIQIN. At 150–184 the chain is on the extracellular side; the sequence is IHIKDWLDRYEGNTTWNFSMSDFVTFSVSVKFTMT. 2 N-linked (GlcNAc...) asparagine glycosylation sites follow: Asn162 and Asn166. The chain crosses the membrane as a helical span at residues 185 to 205; that stretch reads MFSLTPFTVALISFSLLIFSL. Residues 206–232 are Cytoplasmic-facing; sequence QKHLQKMQLNYKGHREPRTKVHTNALK. The helical transmembrane segment at 233-253 threads the bilayer; the sequence is IVISFLLLYASFFLCILISWI. Topologically, residues 254 to 261 are extracellular; the sequence is SELYQNTA. The helical transmembrane segment at 262–282 threads the bilayer; the sequence is IYMLCETIGLFYPSSHSFLLI. The Cytoplasmic portion of the chain corresponds to 283–303; sequence LGNPKLRQAFLLVAAKVWAKR.

Belongs to the G-protein coupled receptor T2R family.

It localises to the membrane. Receptor that may play a role in the perception of bitterness and is gustducin-linked. May play a role in sensing the chemical composition of the gastrointestinal content. The activity of this receptor may stimulate alpha gustducin, mediate PLC-beta-2 activation and lead to the gating of TRPM5. This is Taste receptor type 2 member 13 (TAS2R13) from Pongo pygmaeus (Bornean orangutan).